Consider the following 121-residue polypeptide: Small ribosomal subunit protein uS13 (121 aa).

Residues 94-121 (GLPMRGQRTRTNARTRKGPRKAAAALKK) form a disordered region.

This sequence belongs to the universal ribosomal protein uS13 family. As to quaternary structure, part of the 30S ribosomal subunit. Forms a loose heterodimer with protein S19. Forms two bridges to the 50S subunit in the 70S ribosome.

In terms of biological role, located at the top of the head of the 30S subunit, it contacts several helices of the 16S rRNA. In the 70S ribosome it contacts the 23S rRNA (bridge B1a) and protein L5 of the 50S subunit (bridge B1b), connecting the 2 subunits; these bridges are implicated in subunit movement. Contacts the tRNAs in the A and P-sites. This chain is Small ribosomal subunit protein uS13, found in Polaromonas sp. (strain JS666 / ATCC BAA-500).